The following is a 156-amino-acid chain: Ribosomal RNA large subunit methyltransferase H (156 aa).

Residues L73, G104, and 123 to 128 (LSALTL) each bind S-adenosyl-L-methionine.

Belongs to the RNA methyltransferase RlmH family. In terms of assembly, homodimer.

The protein resides in the cytoplasm. The enzyme catalyses pseudouridine(1915) in 23S rRNA + S-adenosyl-L-methionine = N(3)-methylpseudouridine(1915) in 23S rRNA + S-adenosyl-L-homocysteine + H(+). Its function is as follows. Specifically methylates the pseudouridine at position 1915 (m3Psi1915) in 23S rRNA. The polypeptide is Ribosomal RNA large subunit methyltransferase H (Psychromonas ingrahamii (strain DSM 17664 / CCUG 51855 / 37)).